Reading from the N-terminus, the 270-residue chain is Nodule lectin (270 aa).

Positions 1 to 33 are cleaved as a signal peptide; the sequence is MAFYRTNLPTRELFSLVSVVIVLLATNINSVQA. Residues 34–41 constitute a propeptide that is removed on maturation; the sequence is LSFNFTKL. Asparagine 134 carries N-linked (GlcNAc...) asparagine glycosylation.

Belongs to the leguminous lectin family. In terms of processing, glycosylated in a boron-dependent manner. Glycosylation is required for localization to symbiosomes. 3 different glycosylation variants, NLEC-1A, NLEC-1B and NLEC-1C, have been identified. As to expression, expressed in nodules of Rhizobium-infected and uninfected roots and in the root stele near the nodule attachment point. In roots which have been colonized by the endomycorrhizal fungus G.versiforme, detected only in cortical cells colonized by the fungus, mainly those containing arbuscules.

The protein localises to the symbiosome. It is found in the peribacteroid space. It localises to the peribacteroid membrane. Functionally, involved in symbiosome development. The protein is Nodule lectin (NLEC1) of Pisum sativum (Garden pea).